The primary structure comprises 302 residues: Oxygen-dependent coproporphyrinogen-III oxidase (302 aa).

Ser94 lines the substrate pocket. A divalent metal cation contacts are provided by His98 and His108. The active-site Proton donor is the His108. Residue 110 to 112 (NVR) participates in substrate binding. His147 and His177 together coordinate a divalent metal cation. The segment at 242 to 277 (YVEFNLVWDRGTLFGLQSGGRTESILMSMPPLVRWE) is important for dimerization. 260-262 (GGR) lines the substrate pocket.

The protein belongs to the aerobic coproporphyrinogen-III oxidase family. Homodimer. The cofactor is a divalent metal cation.

The protein resides in the cytoplasm. The catalysed reaction is coproporphyrinogen III + O2 + 2 H(+) = protoporphyrinogen IX + 2 CO2 + 2 H2O. Its pathway is porphyrin-containing compound metabolism; protoporphyrin-IX biosynthesis; protoporphyrinogen-IX from coproporphyrinogen-III (O2 route): step 1/1. In terms of biological role, involved in the heme biosynthesis. Catalyzes the aerobic oxidative decarboxylation of propionate groups of rings A and B of coproporphyrinogen-III to yield the vinyl groups in protoporphyrinogen-IX. The polypeptide is Oxygen-dependent coproporphyrinogen-III oxidase (Chromobacterium violaceum (strain ATCC 12472 / DSM 30191 / JCM 1249 / CCUG 213 / NBRC 12614 / NCIMB 9131 / NCTC 9757 / MK)).